The following is a 267-amino-acid chain: Methylglyoxal reductase DkgB (267 aa).

Residue Y39 is the Proton donor of the active site. Position 97 (H97) interacts with substrate. Position 179 to 231 (179 to 231) interacts with NADP(+); the sequence is MTLAYGKALKDEVIARIAAKHNATPAQVILAWAMGEGYSVIPSSTKRENLESN.

The protein belongs to the aldo/keto reductase family. In terms of assembly, monomer.

The protein resides in the cytoplasm. The catalysed reaction is hydroxyacetone + NADP(+) = methylglyoxal + NADPH + H(+). Functionally, aldo-keto reductase that significantly contributes to cellular methylglyoxal detoxification by catalyzing the NADPH-dependent conversion of methylglyoxal to acetol. This chain is Methylglyoxal reductase DkgB, found in Escherichia coli O157:H7.